The following is a 468-amino-acid chain: Uronate isomerase (468 aa).

The protein belongs to the metallo-dependent hydrolases superfamily. Uronate isomerase family.

It carries out the reaction D-glucuronate = D-fructuronate. The enzyme catalyses aldehydo-D-galacturonate = keto-D-tagaturonate. It functions in the pathway carbohydrate metabolism; pentose and glucuronate interconversion. The polypeptide is Uronate isomerase (Endomicrobium trichonymphae).